The sequence spans 210 residues: Pyridoxine/pyridoxamine 5'-phosphate oxidase (210 aa).

Substrate contacts are provided by residues 7 to 10 (REDY) and lysine 65. Residues 60–65 (RMVLLK), 75–76 (FT), arginine 81, lysine 82, and glutamine 104 each bind FMN. Substrate is bound by residues tyrosine 122, arginine 126, and serine 130. Residues 139-140 (QS) and tryptophan 183 each bind FMN. 189–191 (RLH) contributes to the substrate binding site. Arginine 193 is an FMN binding site.

This sequence belongs to the pyridoxamine 5'-phosphate oxidase family. In terms of assembly, homodimer. FMN is required as a cofactor.

The catalysed reaction is pyridoxamine 5'-phosphate + O2 + H2O = pyridoxal 5'-phosphate + H2O2 + NH4(+). The enzyme catalyses pyridoxine 5'-phosphate + O2 = pyridoxal 5'-phosphate + H2O2. Its pathway is cofactor metabolism; pyridoxal 5'-phosphate salvage; pyridoxal 5'-phosphate from pyridoxamine 5'-phosphate: step 1/1. It functions in the pathway cofactor metabolism; pyridoxal 5'-phosphate salvage; pyridoxal 5'-phosphate from pyridoxine 5'-phosphate: step 1/1. Its function is as follows. Catalyzes the oxidation of either pyridoxine 5'-phosphate (PNP) or pyridoxamine 5'-phosphate (PMP) into pyridoxal 5'-phosphate (PLP). The polypeptide is Pyridoxine/pyridoxamine 5'-phosphate oxidase (Neisseria meningitidis serogroup C (strain 053442)).